The primary structure comprises 371 residues: MATFLRPELSNFRAYSTPTSDSLPLELDYLDTNEFPWDLPTALKEVLAQQYVSTLASHRYPDSHHWPLRQAIARYVSEQSPTEISPHQIAVGNGSDELIRSILLATAIGGYGSILVAEPTFSIYGILAQTLGIPVHRATRDPDTFAVEIAAANTLIAQAAPPVRVLFMLQPNSPTGNPLTAAEVDWLRQLPEDILVVIDEAYFEFSGKTLVGDLAAHPNWLILRTFSKAFRLAAHRVGYAIGNAEVIAVLEKVRLPYNLPTFSQVAAQVVLDHRQALLAEIPTVLAQRDRLYKWLQSCPQLHVWPSVANFLFFRLREPQHTPSLWDALRDQGTLVRAIAGGIRVTIGTPAQMERFWQRLQASLNQQKSTDN.

Lys-228 is subject to N6-(pyridoxal phosphate)lysine.

The protein belongs to the class-II pyridoxal-phosphate-dependent aminotransferase family. Histidinol-phosphate aminotransferase subfamily. As to quaternary structure, homodimer. It depends on pyridoxal 5'-phosphate as a cofactor.

The enzyme catalyses L-histidinol phosphate + 2-oxoglutarate = 3-(imidazol-4-yl)-2-oxopropyl phosphate + L-glutamate. Its pathway is amino-acid biosynthesis; L-histidine biosynthesis; L-histidine from 5-phospho-alpha-D-ribose 1-diphosphate: step 7/9. The protein is Histidinol-phosphate aminotransferase of Thermosynechococcus vestitus (strain NIES-2133 / IAM M-273 / BP-1).